We begin with the raw amino-acid sequence, 606 residues long: Aspartate--tRNA(Asp/Asn) ligase (606 aa).

An L-aspartate-binding site is contributed by Glu177. The tract at residues 201 to 204 (QLFK) is aspartate. Arg223 is a binding site for L-aspartate. Residues 223–225 (RDE) and Gln232 each bind ATP. His461 serves as a coordination point for L-aspartate. Glu499 contributes to the ATP binding site. Arg506 contributes to the L-aspartate binding site. 551-554 (GMDR) lines the ATP pocket.

The protein belongs to the class-II aminoacyl-tRNA synthetase family. Type 1 subfamily. In terms of assembly, homodimer.

The protein resides in the cytoplasm. The catalysed reaction is tRNA(Asx) + L-aspartate + ATP = L-aspartyl-tRNA(Asx) + AMP + diphosphate. Its function is as follows. Aspartyl-tRNA synthetase with relaxed tRNA specificity since it is able to aspartylate not only its cognate tRNA(Asp) but also tRNA(Asn). Reaction proceeds in two steps: L-aspartate is first activated by ATP to form Asp-AMP and then transferred to the acceptor end of tRNA(Asp/Asn). This is Aspartate--tRNA(Asp/Asn) ligase from Prochlorococcus marinus (strain MIT 9313).